Consider the following 450-residue polypeptide: MSAHGDPKPMTARKGGALTGTAEVPGDKSISHRSLIFGAMAVGETRVTGLLEGQDVLDTASAMRAFGAEVAREDDGTWSIHGVGVGGFVEPDDVLDCGNSGTGVRLLMGAMATTPISVTFTGDASLRSRPMARVTDPLALFGTRAYGRAQGRLPMTLVGAEAPMPVRYATPVPSAQVKSAVLLAGLNAPGETVVIEAEATRDHSERMLAGFGAQISTEVTQEGRVITLTGQPELTPQVIAVPRDPSSAAFPVCAAIITEGSDVLVPNIGLNPTRAGLFETLRDMGADLTYENPREEGGEPVADLRAKFSPDMKGIEVPPERAASMIDEYPILSVVAANAEGTTVMRGVKELRVKESDRIAAMADGLRLNGIEVEDGPDWWIVHGRGPGGMAGGATVATHLDHRIAMSFLCAGFASQQGITIDDSGPIATSFPIFEPLMRDLGARLDRANA.

Residues 1–25 form a disordered region; that stretch reads MSAHGDPKPMTARKGGALTGTAEVP. Positions 28, 29, and 33 each coordinate 3-phosphoshikimate. K28 provides a ligand contact to phosphoenolpyruvate. 2 residues coordinate phosphoenolpyruvate: G101 and R129. Residues S174, Q176, D327, and K354 each coordinate 3-phosphoshikimate. Residue Q176 participates in phosphoenolpyruvate binding. The Proton acceptor role is filled by D327. Residues R358 and R403 each contribute to the phosphoenolpyruvate site.

It belongs to the EPSP synthase family. As to quaternary structure, monomer.

It localises to the cytoplasm. It catalyses the reaction 3-phosphoshikimate + phosphoenolpyruvate = 5-O-(1-carboxyvinyl)-3-phosphoshikimate + phosphate. It functions in the pathway metabolic intermediate biosynthesis; chorismate biosynthesis; chorismate from D-erythrose 4-phosphate and phosphoenolpyruvate: step 6/7. Catalyzes the transfer of the enolpyruvyl moiety of phosphoenolpyruvate (PEP) to the 5-hydroxyl of shikimate-3-phosphate (S3P) to produce enolpyruvyl shikimate-3-phosphate and inorganic phosphate. This Jannaschia sp. (strain CCS1) protein is 3-phosphoshikimate 1-carboxyvinyltransferase.